A 98-amino-acid chain; its full sequence is Integration host factor subunit alpha (98 aa).

The interval 49 to 70 (FGNFDLRDKNQRPGRNPKTGED) is disordered.

Belongs to the bacterial histone-like protein family. Heterodimer of an alpha and a beta chain.

Its function is as follows. This protein is one of the two subunits of integration host factor, a specific DNA-binding protein that functions in genetic recombination as well as in transcriptional and translational control. The sequence is that of Integration host factor subunit alpha from Yersinia pestis.